Reading from the N-terminus, the 343-residue chain is 3-dehydroquinate synthase (343 aa).

NAD(+)-binding positions include 61–66 (SGEKYK), 95–99 (GVISD), 119–120 (TT), lysine 132, lysine 141, and 159–162 (FLKT). 3 residues coordinate Zn(2+): glutamate 174, histidine 231, and histidine 248.

It belongs to the sugar phosphate cyclases superfamily. Dehydroquinate synthase family. Co(2+) is required as a cofactor. It depends on Zn(2+) as a cofactor. NAD(+) serves as cofactor.

The protein localises to the cytoplasm. The catalysed reaction is 7-phospho-2-dehydro-3-deoxy-D-arabino-heptonate = 3-dehydroquinate + phosphate. It participates in metabolic intermediate biosynthesis; chorismate biosynthesis; chorismate from D-erythrose 4-phosphate and phosphoenolpyruvate: step 2/7. Functionally, catalyzes the conversion of 3-deoxy-D-arabino-heptulosonate 7-phosphate (DAHP) to dehydroquinate (DHQ). This chain is 3-dehydroquinate synthase, found in Helicobacter pylori (strain P12).